The sequence spans 355 residues: CRAL-TRIO domain-containing protein C365.01 (355 aa).

Residues 93–260 (ENGLNQNFVK…SMHGQFDETK (168 aa)) form the CRAL-TRIO domain.

The chain is CRAL-TRIO domain-containing protein C365.01 from Schizosaccharomyces pombe (strain 972 / ATCC 24843) (Fission yeast).